We begin with the raw amino-acid sequence, 259 residues long: Type III pantothenate kinase (259 aa).

6–13 lines the ATP pocket; sequence DCGNTNTV. 107-110 lines the substrate pocket; sequence GPDR. The active-site Proton acceptor is D109. D129 is a K(+) binding site. T132 provides a ligand contact to ATP. T184 serves as a coordination point for substrate.

The protein belongs to the type III pantothenate kinase family. In terms of assembly, homodimer. NH4(+) serves as cofactor. The cofactor is K(+).

It is found in the cytoplasm. The catalysed reaction is (R)-pantothenate + ATP = (R)-4'-phosphopantothenate + ADP + H(+). Its pathway is cofactor biosynthesis; coenzyme A biosynthesis; CoA from (R)-pantothenate: step 1/5. Functionally, catalyzes the phosphorylation of pantothenate (Pan), the first step in CoA biosynthesis. This chain is Type III pantothenate kinase, found in Ruegeria pomeroyi (strain ATCC 700808 / DSM 15171 / DSS-3) (Silicibacter pomeroyi).